Reading from the N-terminus, the 373-residue chain is tRNA-specific 2-thiouridylase MnmA (373 aa).

Residues 12-19 and Met-38 contribute to the ATP site; that span reads GMSGGVDS. Positions 98–100 are interaction with target base in tRNA; it reads NPD. Cys-103 functions as the Nucleophile in the catalytic mechanism. A disulfide bridge links Cys-103 with Cys-200. ATP is bound at residue Gly-127. An interaction with tRNA region spans residues 150-152; sequence KDQ. The active-site Cysteine persulfide intermediate is the Cys-200. Residues 312 to 313 form an interaction with tRNA region; that stretch reads RY.

Belongs to the MnmA/TRMU family.

It localises to the cytoplasm. The catalysed reaction is S-sulfanyl-L-cysteinyl-[protein] + uridine(34) in tRNA + AH2 + ATP = 2-thiouridine(34) in tRNA + L-cysteinyl-[protein] + A + AMP + diphosphate + H(+). In terms of biological role, catalyzes the 2-thiolation of uridine at the wobble position (U34) of tRNA, leading to the formation of s(2)U34. The chain is tRNA-specific 2-thiouridylase MnmA from Streptococcus pneumoniae (strain Hungary19A-6).